Consider the following 546-residue polypeptide: Protein FAM124A (546 aa).

Disordered regions lie at residues 1 to 37 (MDPKAGGGGEEDDCVDSGAETGGSDYSHLSSTSSELS), 285 to 361 (KFPK…QRSK), and 488 to 546 (SSSS…EFYI). Low complexity predominate over residues 24–36 (SDYSHLSSTSSEL). Basic residues predominate over residues 285 to 302 (KFPKPGRVHHSSEKKRHS). 2 stretches are compositionally biased toward polar residues: residues 304–324 (PLPSTAVPSHTPGSSQQSPLN) and 347–361 (ANSTPNPPWSFQRSK). Over residues 488 to 511 (SSSSATARAAPPAPSTSTLTDSSP) the composition is skewed to low complexity.

This sequence belongs to the FAM124 family.

This is Protein FAM124A (FAM124A) from Pongo abelii (Sumatran orangutan).